A 124-amino-acid chain; its full sequence is Large ribosomal subunit protein bL12 (124 aa).

Over residues A101–E115 the composition is skewed to basic and acidic residues. The tract at residues A101–K124 is disordered.

It belongs to the bacterial ribosomal protein bL12 family. In terms of assembly, homodimer. Part of the ribosomal stalk of the 50S ribosomal subunit. Forms a multimeric L10(L12)X complex, where L10 forms an elongated spine to which 2 to 4 L12 dimers bind in a sequential fashion. Binds GTP-bound translation factors.

Forms part of the ribosomal stalk which helps the ribosome interact with GTP-bound translation factors. Is thus essential for accurate translation. This chain is Large ribosomal subunit protein bL12, found in Hahella chejuensis (strain KCTC 2396).